A 218-amino-acid chain; its full sequence is Hypoxanthine-guanine phosphoribosyltransferase (218 aa).

Lys69 lines the GMP pocket. Lys103 is modified (N6-acetyllysine). Lys115 participates in a covalent cross-link: Glycyl lysine isopeptide (Lys-Gly) (interchain with G-Cter in SUMO1); alternate. Lys115 is covalently cross-linked (Glycyl lysine isopeptide (Lys-Gly) (interchain with G-Cter in SUMO2); alternate). GMP-binding positions include 134-142 (EDIIDTGKT), Lys166, 186-188 (KFV), and Asp194. Asp138 serves as the catalytic Proton acceptor. Position 142 is a phosphothreonine (Thr142). Asp194 provides a ligand contact to Mg(2+).

It belongs to the purine/pyrimidine phosphoribosyltransferase family. As to quaternary structure, homotetramer. The cofactor is Mg(2+).

The protein resides in the cytoplasm. The catalysed reaction is IMP + diphosphate = hypoxanthine + 5-phospho-alpha-D-ribose 1-diphosphate. The enzyme catalyses GMP + diphosphate = guanine + 5-phospho-alpha-D-ribose 1-diphosphate. Its pathway is purine metabolism; IMP biosynthesis via salvage pathway; IMP from hypoxanthine: step 1/1. Its function is as follows. Converts guanine to guanosine monophosphate, and hypoxanthine to inosine monophosphate. Transfers the 5-phosphoribosyl group from 5-phosphoribosylpyrophosphate onto the purine. Plays a central role in the generation of purine nucleotides through the purine salvage pathway. The chain is Hypoxanthine-guanine phosphoribosyltransferase (Hprt1) from Rattus norvegicus (Rat).